The primary structure comprises 475 residues: Flavin-dependent monooxygenase (475 aa).

Belongs to the aromatic-ring hydroxylase family. It depends on FAD as a cofactor.

It is found in the cytoplasm. It catalyses the reaction a tetracycline + NADPH + O2 + H(+) = an 11a-hydroxytetracycline + NADP(+) + H2O. The enzyme catalyses tetracycline + NADPH + O2 + H(+) = 11a-hydroxytetracycline + NADP(+) + H2O. With respect to regulation, inhibited by anhydrotetracycline. Functionally, an FAD-requiring monooxygenase active on some tetracycline antibiotic derivatives, which leads to their inactivation. Hydroxylates carbon 11a of tetracycline and some analogs. Confers resistance to tetracycline and doxycycline via an oxidoreductase activity; probably monooxygenates the antibiotics. Does not act on tigecycline. The sequence is that of Flavin-dependent monooxygenase from Mycobacteroides abscessus (strain ATCC 19977 / DSM 44196 / CCUG 20993 / CIP 104536 / JCM 13569 / NCTC 13031 / TMC 1543 / L948) (Mycobacterium abscessus).